We begin with the raw amino-acid sequence, 156 residues long: Transcription elongation factor GreA (156 aa).

A coiled-coil region spans residues 44 to 67; it reads ENAEYEAAKEKQAMIEGRIQDLCQ.

The protein belongs to the GreA/GreB family.

In terms of biological role, necessary for efficient RNA polymerase transcription elongation past template-encoded arresting sites. The arresting sites in DNA have the property of trapping a certain fraction of elongating RNA polymerases that pass through, resulting in locked ternary complexes. Cleavage of the nascent transcript by cleavage factors such as GreA or GreB allows the resumption of elongation from the new 3'terminus. GreA releases sequences of 2 to 3 nucleotides. This Syntrophobacter fumaroxidans (strain DSM 10017 / MPOB) protein is Transcription elongation factor GreA.